Here is a 447-residue protein sequence, read N- to C-terminus: MLHRYLPMTEEDKKEMLQTIGVQTIDELFSDIPESVRFKGDLKIKEAKSEPELLKELSQMASKNANLKEYASFLGAGVYDHYAPVIVDHVISRSEFYTAYTPYQPEISQGELQAIFEFQTMICELTGMDVANSSMYDGGTALAEAAMLAAGHTRKKKILVSSAVHPESRAVLETYAKGQNLEVVEINHKDGVTDLDVLQSEVDDTVACVIVQYPNFFGQVEKLADIEKIVHQQKSLFIVSSNPLSLGALTPPGKFGADIVIGDAQPFGIPTQFGGPHCGYFATTKAFMRKIPGRLVGQTVDSDGKRGFVLTLQAREQHIRRDKATSNICSNQALNALAASVAMTALGKQGVKEMARQNISKAQYAKRQFEAKGFTVTFAGPFFNEFVVDCKRPVKEVNDALLQKNIIGGYDLGRDYKEHENHMLVAVTELRTKEEIDTLVNEMGAIQ.

This sequence belongs to the GcvP family. N-terminal subunit subfamily. As to quaternary structure, the glycine cleavage system is composed of four proteins: P, T, L and H. In this organism, the P 'protein' is a heterodimer of two subunits.

It catalyses the reaction N(6)-[(R)-lipoyl]-L-lysyl-[glycine-cleavage complex H protein] + glycine + H(+) = N(6)-[(R)-S(8)-aminomethyldihydrolipoyl]-L-lysyl-[glycine-cleavage complex H protein] + CO2. In terms of biological role, the glycine cleavage system catalyzes the degradation of glycine. The P protein binds the alpha-amino group of glycine through its pyridoxal phosphate cofactor; CO(2) is released and the remaining methylamine moiety is then transferred to the lipoamide cofactor of the H protein. The protein is Probable glycine dehydrogenase (decarboxylating) subunit 1 of Bacillus cereus (strain G9842).